We begin with the raw amino-acid sequence, 216 residues long: MPSANFRLARRGLLFVISSPSGAGKSTIARRILAEDDEIHLSVSVTTRPKRPGEVDGVDYHFVDVPTFKKMVAENQLLEWAHVFDNRYGTPRAPVEEMLHKGQDVLFDIDWQGAQQLWQQASGDTIRVYILPPSFEELERRLRGRGTDSEEVIQKRMARAASEISHWDGYDYVLINDDMDECVKQVKNILTVERIKRRRQIGLIGFTRKLLAPPED.

Residues 12-191 (GLLFVISSPS…CVKQVKNILT (180 aa)) enclose the Guanylate kinase-like domain. 19-26 (SPSGAGKS) is an ATP binding site.

It belongs to the guanylate kinase family.

The protein localises to the cytoplasm. The enzyme catalyses GMP + ATP = GDP + ADP. Its function is as follows. Essential for recycling GMP and indirectly, cGMP. The protein is Guanylate kinase of Zymomonas mobilis subsp. mobilis (strain ATCC 31821 / ZM4 / CP4).